Consider the following 200-residue polypeptide: Regulator of G-protein signaling 16 (200 aa).

Residues cysteine 2 and cysteine 12 are each lipidated (S-palmitoyl cysteine). In terms of domain architecture, RGS spans 65–181; it reads SFDLLLSSKN…LKSPAYRDLA (117 aa). Phosphotyrosine is present on residues tyrosine 168 and tyrosine 177.

Interacts with GNAI1 and GNAQ. Interacts with GNAI3, GNAI3 and GNAO1. In terms of assembly, (Microbial infection) Interacts with porcine circovirus 2 ORF3 protein. Post-translationally, palmitoylated on Cys-2 and/or Cys-12. Phosphorylated. Phosphorylation at Tyr-168 by EGFR enhances GTPase accelerating (GAP) activity toward GNAI1.

The protein resides in the membrane. Regulates G protein-coupled receptor signaling cascades. Inhibits signal transduction by increasing the GTPase activity of G protein alpha subunits, thereby driving them into their inactive GDP-bound form. Plays an important role in the phototransduction cascade by regulating the lifetime and effective concentration of activated transducin alpha. May regulate extra and intracellular mitogenic signals. Functionally, (Microbial infection) Gets inactivated and/or degraded by porcine circovirus 2 ORF3 protein, leading to enhanced expression of IL-6 and IL-8 in infected lymphocytes. This would explain chronic inflammatory response of PCV2 infected pigs. The protein is Regulator of G-protein signaling 16 (RGS16) of Sus scrofa (Pig).